Reading from the N-terminus, the 318-residue chain is Na(+)-translocating NADH-quinone reductase subunit C (318 aa).

The helical transmembrane segment at 13-33 (WYIILFIFVLSLVAGTLLSSV) threads the bilayer. The residue at position 281 (threonine 281) is an FMN phosphoryl threonine.

The protein belongs to the NqrC family. In terms of assembly, composed of six subunits; NqrA, NqrB, NqrC, NqrD, NqrE and NqrF. The cofactor is FMN.

The protein resides in the cell inner membrane. It catalyses the reaction a ubiquinone + n Na(+)(in) + NADH + H(+) = a ubiquinol + n Na(+)(out) + NAD(+). NQR complex catalyzes the reduction of ubiquinone-1 to ubiquinol by two successive reactions, coupled with the transport of Na(+) ions from the cytoplasm to the periplasm. NqrA to NqrE are probably involved in the second step, the conversion of ubisemiquinone to ubiquinol. This Chlamydia muridarum (strain MoPn / Nigg) protein is Na(+)-translocating NADH-quinone reductase subunit C.